The primary structure comprises 165 residues: Austinoid biosynthesis cluster protein J (165 aa).

The protein belongs to the trt14 isomerase family. As to quaternary structure, homodimer.

It participates in secondary metabolite biosynthesis; terpenoid biosynthesis. Its function is as follows. Part of the gene cluster that mediates the biosynthesis of calidodehydroaustin, a fungal meroterpenoid. The first step of the pathway is the synthesis of 3,5-dimethylorsellinic acid by the polyketide synthase ausA. 3,5-dimethylorsellinic acid is then prenylated by the polyprenyl transferase ausN. Further epoxidation by the FAD-dependent monooxygenase ausM and cyclization by the probable terpene cyclase ausL lead to the formation of protoaustinoid A. Protoaustinoid A is then oxidized to spiro-lactone preaustinoid A3 by the combined action of the FAD-binding monooxygenases ausB and ausC, and the dioxygenase ausE. Acid-catalyzed keto-rearrangement and ring contraction of the tetraketide portion of preaustinoid A3 by ausJ lead to the formation of preaustinoid A4. The aldo-keto reductase ausK, with the help of ausH, is involved in the next step by transforming preaustinoid A4 into isoaustinone which is in turn hydroxylated by the P450 monooxygenase ausI to form austinolide. The cytochrome P450 monooxygenase ausG modifies austinolide to austinol. Austinol is further acetylated to austin by the O-acetyltransferase ausP, which spontaneously changes to dehydroaustin. The cytochrome P450 monooxygenase ausR then converts dehydroaustin is into 7-dehydrodehydroaustin. The hydroxylation catalyzed by ausR permits the O-acetyltransferase ausQ to add an additional acetyl group to the molecule, leading to the formation of acetoxydehydroaustin. The short chain dehydrogenase ausT catalyzes the reduction of the double bond present between carbon atoms 1 and 2 to convert 7-dehydrodehydroaustin into 1,2-dihydro-7-hydroxydehydroaustin. AusQ catalyzes not only an acetylation reaction but also the addition of the PKS ausV diketide product to 1,2-dihydro-7-hydroxydehydroaustin, forming precalidodehydroaustin. Finally, the iron/alpha-ketoglutarate-dependent dioxygenase converts precalidodehydroaustin into calidodehydroaustin. The chain is Austinoid biosynthesis cluster protein J from Aspergillus calidoustus.